A 128-amino-acid chain; its full sequence is Probable soluble cytochrome b562 2 (128 aa).

Positions 1–22 (MGKTLMALITAALLSTSSLVMA) are cleaved as a signal peptide. Heme b-binding residues include M29 and H124.

This sequence belongs to the cytochrome b562 family. The cofactor is heme b.

Its subcellular location is the periplasm. In terms of biological role, electron-transport protein of unknown function. In Yersinia pestis, this protein is Probable soluble cytochrome b562 2 (cybC2).